The primary structure comprises 115 residues: SOSS complex subunit C homolog (115 aa).

This sequence belongs to the SOSS-C family.

The protein is SOSS complex subunit C homolog of Drosophila grimshawi (Hawaiian fruit fly).